Here is a 385-residue protein sequence, read N- to C-terminus: Mannitol-1-phosphate 5-dehydrogenase (385 aa).

An NAD(+)-binding site is contributed by 3 to 14 (ALQFGAGNIGRG).

Belongs to the mannitol dehydrogenase family.

It catalyses the reaction D-mannitol 1-phosphate + NAD(+) = beta-D-fructose 6-phosphate + NADH + H(+). The sequence is that of Mannitol-1-phosphate 5-dehydrogenase (mtlD) from Buchnera aphidicola subsp. Acyrthosiphon pisum (strain APS) (Acyrthosiphon pisum symbiotic bacterium).